The primary structure comprises 668 residues: DNA ligase (668 aa).

NAD(+) contacts are provided by residues 32 to 36 (DAEYD), 81 to 82 (SL), and E111. The active-site N6-AMP-lysine intermediate is the K113. NAD(+) is bound by residues R134, E171, K290, and K314. 4 residues coordinate Zn(2+): C408, C411, C426, and C432. Residues 591–668 (EEDLSLKGQT…DEEALIAILS (78 aa)) enclose the BRCT domain.

This sequence belongs to the NAD-dependent DNA ligase family. LigA subfamily. Mg(2+) is required as a cofactor. Requires Mn(2+) as cofactor.

It carries out the reaction NAD(+) + (deoxyribonucleotide)n-3'-hydroxyl + 5'-phospho-(deoxyribonucleotide)m = (deoxyribonucleotide)n+m + AMP + beta-nicotinamide D-nucleotide.. Functionally, DNA ligase that catalyzes the formation of phosphodiester linkages between 5'-phosphoryl and 3'-hydroxyl groups in double-stranded DNA using NAD as a coenzyme and as the energy source for the reaction. It is essential for DNA replication and repair of damaged DNA. The protein is DNA ligase of Shewanella pealeana (strain ATCC 700345 / ANG-SQ1).